A 300-amino-acid polypeptide reads, in one-letter code: Homoserine kinase (300 aa).

82–92 (RPGSGLGSSAA) contacts ATP.

Belongs to the GHMP kinase family. Homoserine kinase subfamily.

It localises to the cytoplasm. It carries out the reaction L-homoserine + ATP = O-phospho-L-homoserine + ADP + H(+). It functions in the pathway amino-acid biosynthesis; L-threonine biosynthesis; L-threonine from L-aspartate: step 4/5. In terms of biological role, catalyzes the ATP-dependent phosphorylation of L-homoserine to L-homoserine phosphate. The protein is Homoserine kinase of Methanocella arvoryzae (strain DSM 22066 / NBRC 105507 / MRE50).